An 83-amino-acid polypeptide reads, in one-letter code: uncharacterized protein (83 aa).

Transmembrane regions (helical) follow at residues 23-43 and 56-76; these read FSLW…QLIK and TIFV…CVFL.

The protein localises to the cell membrane. This is an uncharacterized protein from Bacillus subtilis (strain 168).